We begin with the raw amino-acid sequence, 318 residues long: Acetyl-coenzyme A carboxylase carboxyl transferase subunit alpha (318 aa).

A CoA carboxyltransferase C-terminal domain is found at 31–292; it reads DLTNEIEKLE…NKTITKSLHA (262 aa).

Belongs to the AccA family. As to quaternary structure, acetyl-CoA carboxylase is a heterohexamer composed of biotin carboxyl carrier protein (AccB), biotin carboxylase (AccC) and two subunits each of ACCase subunit alpha (AccA) and ACCase subunit beta (AccD).

It is found in the cytoplasm. The catalysed reaction is N(6)-carboxybiotinyl-L-lysyl-[protein] + acetyl-CoA = N(6)-biotinyl-L-lysyl-[protein] + malonyl-CoA. It participates in lipid metabolism; malonyl-CoA biosynthesis; malonyl-CoA from acetyl-CoA: step 1/1. Its function is as follows. Component of the acetyl coenzyme A carboxylase (ACC) complex. First, biotin carboxylase catalyzes the carboxylation of biotin on its carrier protein (BCCP) and then the CO(2) group is transferred by the carboxyltransferase to acetyl-CoA to form malonyl-CoA. This chain is Acetyl-coenzyme A carboxylase carboxyl transferase subunit alpha, found in Listeria monocytogenes serotype 4a (strain HCC23).